We begin with the raw amino-acid sequence, 208 residues long: Cytochrome c oxidase assembly protein CtaG (208 aa).

The Cytoplasmic segment spans residues 1–19; the sequence is MPDTQPNVSPNPIRRRGLG. A helical; Signal-anchor for type II membrane protein membrane pass occupies residues 20-42; the sequence is RDATVASICGLVVALMVGASFAA. Residues 43–208 are Periplasmic-facing; it reads VPFYNWFCRT…TAPDKRKGNL (166 aa).

This sequence belongs to the COX11/CtaG family.

It is found in the cell inner membrane. Functionally, exerts its effect at some terminal stage of cytochrome c oxidase synthesis, probably by being involved in the insertion of the copper B into subunit I. The sequence is that of Cytochrome c oxidase assembly protein CtaG from Rhodopseudomonas palustris (strain HaA2).